The following is a 552-amino-acid chain: MEQMKPCAANSPPLTPIGFLERAATVYGDCTSIVYGSNTVYTWRETNLRCLRVASSLSSIGIGRSDVVSVLSPNTPAMYELQFAVPMSGAILNNINTRLDARTVSVLLRHCGSKLLFVDVFSVDLAVEAISMMTTDPPILVFIADKEEEGGDADVADRTKFSYTYDDLIHRGDLDFKWIRPESEWDPVVLNYTSGTTSAPKGVVHCHRGIFVMSIDSLIDWTVPKNPVYLWTLPIFHANGWSYPWGIAAVGGTNVCLRKFDAPLIYRLIRDHGVTHMCGAPVVLNMLSATNEFQPLNRPVNILTAGAPPPAAVLLRAESIGFVISHGYGLTETAGLNVSCAWKPQWNRLPASDRARLKARQGVRTVGFTEIDVVDPESGRSVERNGETVGEIVMRGSSIMLGYLKDPVGTEKALKNGWFYTGDVGVIHSDGYLEIKDRSKDIIITGGENVSSVEVETVLYTNPAVNEVAVVARPDVFWGETPCAFVSLKSGLTQRPTEVEMIEYCRKKMPKYMVPKTVSFVDELPKTSTGKVMKFVLREIAKKMGTTRLSRM.

The short motif at 550–552 (SRM) is the Microbody targeting signal element.

The protein belongs to the ATP-dependent AMP-binding enzyme family. As to expression, expressed in roots, stems and developing seeds.

The protein resides in the peroxisome. Functionally, may act as an acid--thiol ligase that activates carboxylic acids by forming acyl-CoAs. This Arabidopsis thaliana (Mouse-ear cress) protein is Probable acyl-activating enzyme 5, peroxisomal (AAE5).